We begin with the raw amino-acid sequence, 212 residues long: Adenylate kinase (212 aa).

ATP is bound at residue 10–15 (GSGKGT). The tract at residues 30-59 (STGDLMRKEINDETPLGIECARYMNEGRLV) is NMP. AMP is bound by residues Thr-31, Arg-36, 57–59 (RLV), and Gln-90. Residues 124–161 (GRLICPKCKVSYHIISRKPKLEGICDNDGTELVRRPDD) are LID. Arg-125 is an ATP binding site. Positions 128 and 131 each coordinate Zn(2+). Residue 134–135 (SY) participates in ATP binding. Zn(2+) is bound by residues Cys-148 and Asp-151. Residues Arg-158 and Arg-169 each contribute to the AMP site. Asn-198 serves as a coordination point for ATP.

It belongs to the adenylate kinase family. Monomer.

Its subcellular location is the cytoplasm. The enzyme catalyses AMP + ATP = 2 ADP. Its pathway is purine metabolism; AMP biosynthesis via salvage pathway; AMP from ADP: step 1/1. Its function is as follows. Catalyzes the reversible transfer of the terminal phosphate group between ATP and AMP. Plays an important role in cellular energy homeostasis and in adenine nucleotide metabolism. The sequence is that of Adenylate kinase from Mesoplasma florum (strain ATCC 33453 / NBRC 100688 / NCTC 11704 / L1) (Acholeplasma florum).